The sequence spans 183 residues: Adenylate kinase (183 aa).

12–17 is an ATP binding site; the sequence is GAGKGT. Residues 32-61 are NMP; that stretch reads STGDLLRSEVAAGTALGQEAEAVMNRGELV. AMP-binding positions include Thr33, Arg38, 59-61, 86-89, and Gln93; these read ELV and GFPR. The segment at 127-133 is LID; the sequence is ARGRDDD. Arg128 is an ATP binding site. Positions 130 and 141 each coordinate AMP. Residue Gly169 participates in ATP binding.

This sequence belongs to the adenylate kinase family. Monomer.

The protein localises to the cytoplasm. The catalysed reaction is AMP + ATP = 2 ADP. It participates in purine metabolism; AMP biosynthesis via salvage pathway; AMP from ADP: step 1/1. Its function is as follows. Catalyzes the reversible transfer of the terminal phosphate group between ATP and AMP. Plays an important role in cellular energy homeostasis and in adenine nucleotide metabolism. The protein is Adenylate kinase of Parasynechococcus marenigrum (strain WH8102).